Reading from the N-terminus, the 301-residue chain is Probable cyclic nucleotide phosphodiesterase RER_40650 (301 aa).

7 residues coordinate Fe cation: aspartate 20, histidine 22, aspartate 61, asparagine 95, histidine 167, histidine 205, and histidine 207. AMP is bound by residues histidine 22, aspartate 61, and 95–96 (NH). Histidine 207 is a binding site for AMP.

Belongs to the cyclic nucleotide phosphodiesterase class-III family. Fe(2+) serves as cofactor.

In Rhodococcus erythropolis (strain PR4 / NBRC 100887), this protein is Probable cyclic nucleotide phosphodiesterase RER_40650.